The primary structure comprises 1026 residues: Chromodomain-helicase-DNA-binding protein 1-like (1026 aa).

The 166-residue stretch at Ser-47–Ser-212 folds into the Helicase ATP-binding domain. An ATP-binding site is contributed by Asp-60–Thr-67. The DEAH box signature appears at Asp-163–His-166. Residues Leu-340–Ala-494 form the Helicase C-terminal domain. Residues Leu-540–Ala-668 are a coiled coil. Residues Ala-594 to Leu-628 are regulatory linker segment (RLS). The segment at Leu-606–Lys-655 is disordered. Positions Asn-608–Lys-666 are required for ATPase activity. Positions His-697–Arg-870 constitute a Macro domain. Over residues Val-877 to Ala-907 the composition is skewed to low complexity. Residues Val-877 to Pro-929 are disordered. The region spanning Gly-930–Ile-1023 is the BRCT domain.

It belongs to the SNF2/RAD54 helicase family. In terms of assembly, interacts with nucleosomes; interacts with the acidic patch of histones.

The protein resides in the nucleus. The protein localises to the chromosome. The catalysed reaction is ATP + H2O = ADP + phosphate + H(+). Adopts an inactive conformation in absence of DNA damage. Binding to poly-ADP-ribosylated histones activates the ATP-dependent chromatin remodeler activity. Functionally, ATP-dependent chromatin remodeler that mediates chromatin-remodeling following DNA damage. Recruited to DNA damage sites through interaction with poly-ADP-ribose: specifically recognizes and binds histones that are poly-ADP-ribosylated on serine residues in response to DNA damage. Poly-ADP-ribose-binding activates the ATP-dependent chromatin remodeler activity, thereby regulating chromatin during DNA repair. Catalyzes nucleosome sliding away from DNA breaks in an ATP-dependent manner. The chain is Chromodomain-helicase-DNA-binding protein 1-like (chd1l) from Danio rerio (Zebrafish).